The chain runs to 68 residues: Large ribosomal subunit protein bL35 (68 aa).

It belongs to the bacterial ribosomal protein bL35 family.

This chain is Large ribosomal subunit protein bL35, found in Rickettsia felis (strain ATCC VR-1525 / URRWXCal2) (Rickettsia azadi).